We begin with the raw amino-acid sequence, 170 residues long: MAQIRIHEINTRIENEKEVQLFLQKEDVLYEKWDISKLPAHLQNNYALTDENKEEILTLFSNEIADVSQRRGYKAHDIISLSSATPNLDELLINFKQEHHHTDDEVRFIVSGHGIFAIQGKDGRFFDVELEPGDLISVPENVRHYFTLQDDRQVVAIRIFVTTAGWVPIY.

Residues H99, H101, E105, and H144 each coordinate Fe(2+). Positions 99, 101, 105, and 144 each coordinate Ni(2+).

It belongs to the acireductone dioxygenase (ARD) family. As to quaternary structure, monomer. Requires Fe(2+) as cofactor. Ni(2+) serves as cofactor.

It catalyses the reaction 1,2-dihydroxy-5-(methylsulfanyl)pent-1-en-3-one + O2 = 3-(methylsulfanyl)propanoate + CO + formate + 2 H(+). The enzyme catalyses 1,2-dihydroxy-5-(methylsulfanyl)pent-1-en-3-one + O2 = 4-methylsulfanyl-2-oxobutanoate + formate + 2 H(+). Its pathway is amino-acid biosynthesis; L-methionine biosynthesis via salvage pathway; L-methionine from S-methyl-5-thio-alpha-D-ribose 1-phosphate: step 5/6. In terms of biological role, catalyzes 2 different reactions between oxygen and the acireductone 1,2-dihydroxy-3-keto-5-methylthiopentene (DHK-MTPene) depending upon the metal bound in the active site. Fe-containing acireductone dioxygenase (Fe-ARD) produces formate and 2-keto-4-methylthiobutyrate (KMTB), the alpha-ketoacid precursor of methionine in the methionine recycle pathway. Ni-containing acireductone dioxygenase (Ni-ARD) produces methylthiopropionate, carbon monoxide and formate, and does not lie on the methionine recycle pathway. This is Acireductone dioxygenase from Bacillus cytotoxicus (strain DSM 22905 / CIP 110041 / 391-98 / NVH 391-98).